The following is a 265-amino-acid chain: Indole-3-glycerol phosphate synthase (265 aa).

It belongs to the TrpC family.

It carries out the reaction 1-(2-carboxyphenylamino)-1-deoxy-D-ribulose 5-phosphate + H(+) = (1S,2R)-1-C-(indol-3-yl)glycerol 3-phosphate + CO2 + H2O. It participates in amino-acid biosynthesis; L-tryptophan biosynthesis; L-tryptophan from chorismate: step 4/5. The sequence is that of Indole-3-glycerol phosphate synthase from Hyphomonas neptunium (strain ATCC 15444).